We begin with the raw amino-acid sequence, 551 residues long: Putative transport protein CGSHiEE_03135 (551 aa).

The next 5 helical transmembrane spans lie at 4 to 24, 28 to 48, 65 to 85, 95 to 115, and 157 to 177; these read IAITISLLALVAVIGLWIGHW, GVGLGIGGVLFGGIIVAHFTD, FGLILFVYTIGIQVGPGFFSS, AFAILIIVLGSIAVVLVHKIA, and VSYAMAYPFGICGILLAMWLI. 2 consecutive RCK C-terminal domains span residues 191–275 and 277–360; these read RFNA…IIGY and VDAP…VIGN. 6 helical membrane-spanning segments follow: residues 370–390, 402–424, 438–458, 463–483, 492–512, and 529–549; these read MLPVFIGIGLGVLVGSIPFYI, AGGPLVVVLILARIGTIGKLYWF, IVLFLAVVGLKSGGSFFDTLV, LEWMGYGIFITFVPLIIAGTI, YLTICGLLAGSMTDPPALAFA, and VYPLVMFLRIMSPQLLAVLLW.

The protein belongs to the AAE transporter (TC 2.A.81) family. YidE subfamily.

The protein resides in the cell membrane. The protein is Putative transport protein CGSHiEE_03135 of Haemophilus influenzae (strain PittEE).